The primary structure comprises 526 residues: Bifunctional purine biosynthesis protein PurH (526 aa).

One can recognise an MGS-like domain in the interval 15–161 (DVVPIRRALI…KNHANVAIVV (147 aa)).

This sequence belongs to the PurH family.

It carries out the reaction (6R)-10-formyltetrahydrofolate + 5-amino-1-(5-phospho-beta-D-ribosyl)imidazole-4-carboxamide = 5-formamido-1-(5-phospho-D-ribosyl)imidazole-4-carboxamide + (6S)-5,6,7,8-tetrahydrofolate. It catalyses the reaction IMP + H2O = 5-formamido-1-(5-phospho-D-ribosyl)imidazole-4-carboxamide. It participates in purine metabolism; IMP biosynthesis via de novo pathway; 5-formamido-1-(5-phospho-D-ribosyl)imidazole-4-carboxamide from 5-amino-1-(5-phospho-D-ribosyl)imidazole-4-carboxamide (10-formyl THF route): step 1/1. It functions in the pathway purine metabolism; IMP biosynthesis via de novo pathway; IMP from 5-formamido-1-(5-phospho-D-ribosyl)imidazole-4-carboxamide: step 1/1. This chain is Bifunctional purine biosynthesis protein PurH, found in Leifsonia xyli subsp. xyli (strain CTCB07).